Consider the following 195-residue polypeptide: MAKLYFYYSTMNAGKSTTLLQSAYNYNERNMNTLVYTAAIDDRFGAGRVTSRIGISQQAKLFNRESNLFEEIKRHLASEKLHCILIDEAQFLTKQQVYQLSDVVDLLNIPVLCYGLRTDFQAELFEGSQYLLAWADQLEELKTICHCGRKANFVLRLNERGDVVKDGEQIQIGGNERYLSVCRFHFKQKTGKLHN.

Residues 9-16 (STMNAGKS) and 87-90 (DEAQ) contribute to the ATP site. The Proton acceptor role is filled by E88. Zn(2+) is bound by residues C145, C147, C182, and H185.

This sequence belongs to the thymidine kinase family. Homotetramer.

It localises to the cytoplasm. It carries out the reaction thymidine + ATP = dTMP + ADP + H(+). The polypeptide is Thymidine kinase (Mannheimia succiniciproducens (strain KCTC 0769BP / MBEL55E)).